Consider the following 503-residue polypeptide: Variant surface glycoprotein ILTAT 1.3 (503 aa).

The N-terminal stretch at 1–29 is a signal peptide; the sequence is MTKAYENRMLLQALVLAAVLCTTHAEGTA. Intrachain disulfides connect Cys42/Cys168 and Cys150/Cys206. 2 N-linked (GlcNAc...) asparagine glycosylation sites follow: Asn419 and Asn432. The GPI-anchor amidated aspartate moiety is linked to residue Asp480. A propeptide spans 481–503 (removed in mature form); sequence SSFILNKQFALSVVSAAFAALLF.

It is found in the cell membrane. VSG forms a coat on the surface of the parasite. The trypanosome evades the immune response of the host by expressing a series of antigenically distinct VSGs from an estimated 1000 VSG genes. This is Variant surface glycoprotein ILTAT 1.3 from Trypanosoma brucei brucei.